We begin with the raw amino-acid sequence, 1124 residues long: Eukaryotic translation initiation factor 3 subunit A (1124 aa).

Residues 96–124 (LKMAEERTEQAQQQSSQATVDIDDLDNLA) adopt a coiled-coil conformation. The 182-residue stretch at 317–498 (IQRMTTHVLI…ECVHFGTDLS (182 aa)) folds into the PCI domain. 2 stretches are compositionally biased toward basic and acidic residues: residues 812–851 (EERR…RQLA) and 860–883 (EVER…ERRP). The disordered stretch occupies residues 812–1124 (EERRRIEEEL…EEGWTDVKHR (313 aa)). A compositionally biased stretch (low complexity) spans 900 to 910 (PAAAAPANPAA). Basic and acidic residues-rich tracts occupy residues 928–952 (PRER…EKDG), 960–990 (RGGD…DRGP), 1007–1048 (PRRD…RGGG), and 1063–1100 (DDNR…EARP).

The protein belongs to the eIF-3 subunit A family. As to quaternary structure, component of the eukaryotic translation initiation factor 3 (eIF-3) complex.

Its subcellular location is the cytoplasm. Functionally, RNA-binding component of the eukaryotic translation initiation factor 3 (eIF-3) complex, which is involved in protein synthesis of a specialized repertoire of mRNAs and, together with other initiation factors, stimulates binding of mRNA and methionyl-tRNAi to the 40S ribosome. The eIF-3 complex specifically targets and initiates translation of a subset of mRNAs involved in cell proliferation. This Anopheles gambiae (African malaria mosquito) protein is Eukaryotic translation initiation factor 3 subunit A.